Here is a 161-residue protein sequence, read N- to C-terminus: UPF0225 protein GSU1048 (161 aa).

It belongs to the UPF0225 family.

The chain is UPF0225 protein GSU1048 from Geobacter sulfurreducens (strain ATCC 51573 / DSM 12127 / PCA).